We begin with the raw amino-acid sequence, 338 residues long: D-erythrose-4-phosphate dehydrogenase (338 aa).

11–12 is an NAD(+) binding site; that stretch reads RI. Substrate-binding positions include 153–155, arginine 199, 212–213, and arginine 235; these read SCT and TK. Cysteine 154 functions as the Nucleophile in the catalytic mechanism. Residue asparagine 317 coordinates NAD(+).

The protein belongs to the glyceraldehyde-3-phosphate dehydrogenase family. Epd subfamily. As to quaternary structure, homotetramer.

Its subcellular location is the cytoplasm. It catalyses the reaction D-erythrose 4-phosphate + NAD(+) + H2O = 4-phospho-D-erythronate + NADH + 2 H(+). The protein operates within cofactor biosynthesis; pyridoxine 5'-phosphate biosynthesis; pyridoxine 5'-phosphate from D-erythrose 4-phosphate: step 1/5. Its function is as follows. Catalyzes the NAD-dependent conversion of D-erythrose 4-phosphate to 4-phosphoerythronate. This is D-erythrose-4-phosphate dehydrogenase from Shewanella oneidensis (strain ATCC 700550 / JCM 31522 / CIP 106686 / LMG 19005 / NCIMB 14063 / MR-1).